We begin with the raw amino-acid sequence, 352 residues long: Sphingosine 1-phosphate receptor 2 (352 aa).

Topologically, residues 1-34 (MGGLYSEYLNPEKVLEHYNYTKETLDMQETTSRK) are extracellular. A glycan (N-linked (GlcNAc...) asparagine) is linked at N19. Residues 35 to 59 (VASAFIIILCCAIVVENLLVLIAVA) traverse the membrane as a helical segment. Residues 60 to 66 (RNSKFHS) are Cytoplasmic-facing. The helical transmembrane segment at 67–95 (AMYLFLGNLAASDLLAGVAFVANTLLSGH) threads the bilayer. Residues 96–109 (VTLSLTPVQWFARE) are Extracellular-facing. A helical transmembrane segment spans residues 110–128 (GSAFITLSASVFSLLAIAI). Residues 129-147 (ERQVALAKVKLYGSDKSCR) lie on the Cytoplasmic side of the membrane. A helical membrane pass occupies residues 148–173 (MLMLIGASWLISLILGGLPILGWNCL). The Extracellular segment spans residues 174–189 (NQLEACSTVLPLYAKH). Residues 190–210 (YVLCVVTIFSVILLAIVALYV) form a helical membrane-spanning segment. Topologically, residues 211–233 (RIYFVVRSSHADVAGPQTLALLK) are cytoplasmic. Residues 234–255 (TVTIVLGVFIICWLPAFSILLL) form a helical membrane-spanning segment. The Extracellular segment spans residues 256–271 (DSTCPVRACPVLYKAH). Residues 272-292 (YFFAFATLNSLLNPVIYTWRS) form a helical membrane-spanning segment. At 293–352 (RDLRREVLRPLQCWRRGKGVTGRRGGNPGHRLLPLRSSSSLERGMHMPTSPTFLEGNTVV) the chain is on the cytoplasmic side. A lipid anchor (S-palmitoyl cysteine) is attached at C305. The interval 333–352 (LERGMHMPTSPTFLEGNTVV) is disordered.

This sequence belongs to the G-protein coupled receptor 1 family. Most abundant in heart and lung; low, but clearly observed in kidney, liver and thymus; much lower but detectable in brain, testis, stomach and intestine. Not significantly detected in any of the sections of embryonic day (E) 14-18, except in embryonic brain.

The protein resides in the cell membrane. In terms of biological role, receptor for the lysosphingolipid sphingosine 1-phosphate (S1P). S1P is a bioactive lysophospholipid that elicits diverse physiological effects on most types of cells and tissues. Receptor for the chemokine-like protein FAM19A5. Mediates the inhibitory effect of FAM19A5 on vascular smooth muscle cell proliferation and migration. In lymphoid follicles, couples the binding of S1P to the activation of GNA13 and downstream inhibition of AKT activation leading to suppression of germinal center (GC) B cell growth and migration outside the GC niche. In Mus musculus (Mouse), this protein is Sphingosine 1-phosphate receptor 2 (S1pr2).